The chain runs to 249 residues: Triosephosphate isomerase (249 aa).

Substrate is bound at residue 8 to 10 (NWK). The Electrophile role is filled by histidine 95. Residue glutamate 163 is the Proton acceptor of the active site. Residues glycine 169 and serine 209 each coordinate substrate.

It belongs to the triosephosphate isomerase family. As to quaternary structure, homodimer.

The protein resides in the cytoplasm. The catalysed reaction is D-glyceraldehyde 3-phosphate = dihydroxyacetone phosphate. It participates in carbohydrate biosynthesis; gluconeogenesis. Its pathway is carbohydrate degradation; glycolysis; D-glyceraldehyde 3-phosphate from glycerone phosphate: step 1/1. Its function is as follows. Involved in the gluconeogenesis. Catalyzes stereospecifically the conversion of dihydroxyacetone phosphate (DHAP) to D-glyceraldehyde-3-phosphate (G3P). This chain is Triosephosphate isomerase, found in Orientia tsutsugamushi (strain Boryong) (Rickettsia tsutsugamushi).